Reading from the N-terminus, the 294-residue chain is DEP domain-containing protein 4 (294 aa).

Residues 71–162 (LQAQVEIKRR…SNISLYRFLG (92 aa)) enclose the DEP domain.

In Homo sapiens (Human), this protein is DEP domain-containing protein 4 (DEPDC4).